The chain runs to 318 residues: L-lactate dehydrogenase (318 aa).

Residues Val17, Asp38, Lys43, Tyr69, and 83-84 (GA) each bind NAD(+). Residues Gln86 and Arg92 each contribute to the substrate site. NAD(+)-binding positions include Ser105, 122–124 (ATN), and Ser147. 124–127 (NPVD) serves as a coordination point for substrate. A substrate-binding site is contributed by 152 to 155 (DTAR). Lys157 and His172 together coordinate beta-D-fructose 1,6-bisphosphate. His179 functions as the Proton acceptor in the catalytic mechanism. Tyr223 is modified (phosphotyrosine). Residue Thr232 coordinates substrate.

It belongs to the LDH/MDH superfamily. LDH family. In terms of assembly, homotetramer.

The protein localises to the cytoplasm. The enzyme catalyses (S)-lactate + NAD(+) = pyruvate + NADH + H(+). It functions in the pathway fermentation; pyruvate fermentation to lactate; (S)-lactate from pyruvate: step 1/1. Allosterically activated by fructose 1,6-bisphosphate (FBP). Functionally, catalyzes the conversion of lactate to pyruvate. In Staphylococcus saprophyticus subsp. saprophyticus (strain ATCC 15305 / DSM 20229 / NCIMB 8711 / NCTC 7292 / S-41), this protein is L-lactate dehydrogenase.